The following is a 183-amino-acid chain: ATP synthase subunit delta (183 aa).

The protein belongs to the ATPase delta chain family. In terms of assembly, F-type ATPases have 2 components, F(1) - the catalytic core - and F(0) - the membrane proton channel. F(1) has five subunits: alpha(3), beta(3), gamma(1), delta(1), epsilon(1). F(0) has three main subunits: a(1), b(2) and c(10-14). The alpha and beta chains form an alternating ring which encloses part of the gamma chain. F(1) is attached to F(0) by a central stalk formed by the gamma and epsilon chains, while a peripheral stalk is formed by the delta and b chains.

It is found in the cell inner membrane. In terms of biological role, f(1)F(0) ATP synthase produces ATP from ADP in the presence of a proton or sodium gradient. F-type ATPases consist of two structural domains, F(1) containing the extramembraneous catalytic core and F(0) containing the membrane proton channel, linked together by a central stalk and a peripheral stalk. During catalysis, ATP synthesis in the catalytic domain of F(1) is coupled via a rotary mechanism of the central stalk subunits to proton translocation. This protein is part of the stalk that links CF(0) to CF(1). It either transmits conformational changes from CF(0) to CF(1) or is implicated in proton conduction. The chain is ATP synthase subunit delta from Rickettsia typhi (strain ATCC VR-144 / Wilmington).